A 1562-amino-acid polypeptide reads, in one-letter code: MPGEAARAELLLPEADRPGPRTDLSCDAAAATTILGGDRREPCALTPGPSHLALTFLPSKPGARPQPEGASWDAGPGGAPSAWADPGEGGPSPMLLPEGLSSQALSTEAPLPATLEPRIVMGEETCQALLSPRAARTALRDQEGGHASPDPPPELCSQGDLSVPSPPPDPDSFFTPPSTPTKTTYALLPACGPHGDARDSEAELRDELLDSPPASPSGSYITADGDSWASSPSCSLSLLAPAEGLDFPSGWGLSPQGSMVDERELHPAGTPEPPSSESSLSADSSSSWGQEGHFFDLDFLANDPMIPAALLPFQGSLIFQVEAVEVTPLSPEEEEEEAVADPDPGGDLAGEGEEDSTSASFLQSLSDLSITEGMDEAFAFRDDTSAASSDSDSASYAEADDERLYSGEPHAQATLLQDSVQKTEEESGGGAKGLQAQDGTVSWAVEAAPQTSDRGAYLSQRQELISEVTEEGLALGQESTATVTPHTLQVAPGLQVEVATRVTPQAGEEETDSTAGQESAAMAMPQPSQEGISEILGQESVTAEKLPTPQEETSLTLCPDSPQNLKEEGGLDLPSGRKPVAAATIVPRQAKEDLTLPQDSAMTPPLPLQDTDLSSAPKPVAAATIVSQQAEEGLTLPQDSVMTPPLPLQDTELSSAPKPVAAATLVSQQAEEGLTLPQDSAMTPPLPLQDTDLSSAPKPVAAATLVSQQAEEGLTLPQDSAMTPPLPLQDTDLSSAPKPVAAATLVSQQAEEGLTLPQDSAMTPPLPLQDTDLSSAPKPVAAATIVSQQAEEGLTLPQDSAMTPPLPLQDTDLSSAPKPVAAATIVSQQAEEGLTLPQDSAMTPPLPLQDTDLSSAPKPVAAATPVSQQAEEGLTLPQDSAMTPPLPLQDTDLSSAPKPVAAATPVSQQAEEGLTLPQDSAMTAPLPLQDTGPTSGPEPLAVATPQTLQAEAGCAPGTEPVATMAQQEVGEALGPRPAPEEKNAALPTVPEPAALDQVQQDDPQPAAEAGTPWAAQEDADSTLGMEALSLPEPASGAGEEIAEALSRPGREACLEARAHTGDGAKPDSPQKETLEVENQQEGGLKPLAQEHGPRSALGGAREVPDAPPAACPEVSQARLLSPAREERGLSGKSTPEPTLPSAVATEASLDSCPESSVGAVSSLDRGCPDAPAPTSAPTSQQPEPVLGLGSVEQPHEVPSVLGTPLLQPPENLAKGQPSTPVDRPLGPDPSAPGTLAGAALPPLEPPAPCLCQDPQEDSVEDEEPPGSLGLPPPQAGVQPAAAAVSGTTQPLGTGPRVSLSPHSPLLSPKVASMDAKDLALQILPPCQVPPPSGPQSPAGPQGLSAPEQQEDEDSLEEDSPRALGSGQHSDSHGESSAELDEQDILAPQTVQCPAQAPAGGSEETIAKAKQSRSEKKARKAMSKLGLRQIQGVTRITIQKSKNILFVIAKPDVFKSPASDTYVVFGEAKIEDLSQQVHKAAAEKFKVPSEPSALVPESAPRPRVRLECKEEEEEEEEEVDEAGLELRDIELVMAQANVSRAKAVRALRDNHSDIVNAIMELTM.

Over residues 1–13 (MPGEAARAELLLP) the composition is skewed to low complexity. Disordered regions lie at residues 1–24 (MPGEAARAELLLPEADRPGPRTDL), 56–110 (FLPS…TEAP), 131–226 (SPRA…ADGD), 249–288 (SGWGLSPQGSMVDERELHPAGTPEPPSSESSLSADSSSSW), 327–365 (TPLSPEEEEEEAVADPDPGGDLAGEGEEDSTSASFLQSL), 381–458 (RDDT…GAYL), 503–941 (TPQA…EPLA), and 953–1423 (GCAP…AMSK). The span at 195–208 (GDARDSEAELRDEL) shows a compositional bias: basic and acidic residues. The span at 275–287 (SSESSLSADSSSS) shows a compositional bias: low complexity. The segment covering 331-340 (PEEEEEEAVA) has biased composition (acidic residues). A compositionally biased stretch (low complexity) spans 385–397 (SAASSDSDSASYA). Composition is skewed to polar residues over residues 449–458 (PQTSDRGAYL) and 550–564 (QEETSLTLCPDSPQN). Over residues 992-1007 (PAALDQVQQDDPQPAA) the composition is skewed to low complexity. The span at 1048–1074 (PGREACLEARAHTGDGAKPDSPQKETL) shows a compositional bias: basic and acidic residues. Serine 1068 carries the post-translational modification Phosphoserine. Low complexity-rich tracts occupy residues 1172 to 1182 (APTSAPTSQQP) and 1231 to 1241 (APGTLAGAALP). The span at 1254–1264 (PQEDSVEDEEP) shows a compositional bias: acidic residues. Low complexity-rich tracts occupy residues 1265-1284 (PGSLGLPPPQAGVQPAAAAV), 1298-1308 (SLSPHSPLLSP), and 1335-1344 (QSPAGPQGLS). Residues 1348–1357 (QQEDEDSLEE) are compositionally biased toward acidic residues. Serine 1354 carries the phosphoserine modification. Residues 1411 to 1476 (SRSEKKARKA…AKIEDLSQQV (66 aa)) form the NAC-A/B domain.

Belongs to the NAC-alpha family.

The protein localises to the cytoplasm. It localises to the nucleus. Its function is as follows. May prevent inappropriate targeting of non-secretory polypeptides to the endoplasmic reticulum (ER). May bind to nascent polypeptide chains as they emerge from the ribosome and block their interaction with the signal recognition particle (SRP), which normally targets nascent secretory peptides to the ER. May also reduce the inherent affinity of ribosomes for protein translocation sites in the ER membrane (M sites). This is NAC-alpha domain-containing protein 1 (NACAD) from Homo sapiens (Human).